The primary structure comprises 300 residues: Small ribosomal subunit protein uS4m (300 aa).

Positions 146 to 209 (KRVDMVLLRS…MKRKLLKRLK (64 aa)) constitute an S4 RNA-binding domain.

It belongs to the universal ribosomal protein uS4 family.

The protein resides in the mitochondrion. The sequence is that of Small ribosomal subunit protein uS4m (mrps4) from Dictyostelium discoideum (Social amoeba).